The sequence spans 406 residues: Tryptophan 2,3-dioxygenase (406 aa).

Phosphoserine is present on S19. Residues 72 to 76 (FIITH) and R144 each bind substrate. H328 serves as a coordination point for heme. T342 provides a ligand contact to substrate.

It belongs to the tryptophan 2,3-dioxygenase family. Homotetramer. Dimer of dimers. Requires heme as cofactor.

The catalysed reaction is L-tryptophan + O2 = N-formyl-L-kynurenine. It participates in amino-acid degradation; L-tryptophan degradation via kynurenine pathway; L-kynurenine from L-tryptophan: step 1/2. Its function is as follows. Heme-dependent dioxygenase that catalyzes the oxidative cleavage of the L-tryptophan (L-Trp) pyrrole ring and converts L-tryptophan to N-formyl-L-kynurenine. Catalyzes the oxidative cleavage of the indole moiety. The protein is Tryptophan 2,3-dioxygenase of Bos taurus (Bovine).